The sequence spans 359 residues: Mannonate dehydratase (359 aa).

The protein belongs to the mannonate dehydratase family. Fe(2+) serves as cofactor. Requires Mn(2+) as cofactor.

The catalysed reaction is D-mannonate = 2-dehydro-3-deoxy-D-gluconate + H2O. The protein operates within carbohydrate metabolism; pentose and glucuronate interconversion. Functionally, catalyzes the dehydration of D-mannonate. This is Mannonate dehydratase from Moorella thermoacetica (strain ATCC 39073 / JCM 9320).